The chain runs to 207 residues: Ribosomal RNA small subunit methyltransferase G (207 aa).

S-adenosyl-L-methionine-binding positions include G76, Q81, 127–128 (VE), and R141.

It belongs to the methyltransferase superfamily. RNA methyltransferase RsmG family.

It is found in the cytoplasm. It carries out the reaction guanosine(527) in 16S rRNA + S-adenosyl-L-methionine = N(7)-methylguanosine(527) in 16S rRNA + S-adenosyl-L-homocysteine. Its function is as follows. Specifically methylates the N7 position of guanine in position 527 of 16S rRNA. The polypeptide is Ribosomal RNA small subunit methyltransferase G (Neisseria meningitidis serogroup C (strain 053442)).